We begin with the raw amino-acid sequence, 931 residues long: Mitochondrial cox1 translation regulator ppr4 (931 aa).

The transit peptide at 1–16 directs the protein to the mitochondrion; it reads MSKSFAYRHIWCFWRF. 7 PPR repeats span residues 247–277, 282–316, 429–461, 462–496, 497–531, 598–632, and 683–713; these read NEVL…MYRT, SFTA…RPKI, HLLN…KIKV, DERT…GIKT, SNQA…GITE, NVVH…GKAP, and PPSL…YLEY.

Component of the MRH5C complex, composed of mrh5, ppr4, mtf2, and sls1. Proteins mtf2 and sls1 form a subcomplex that serves as a scaffold to bring mrh5 and ppr4 together. The MRH5C complex associates with the small subunit of the mitochondrial ribosome.

The protein resides in the mitochondrion. Its function is as follows. RNA-binding translation activation factor that as part of the MRH5C complex specifically recruits cox1 mRNA to the mitochondrial ribosome for translation initiation. This Schizosaccharomyces pombe (strain 972 / ATCC 24843) (Fission yeast) protein is Mitochondrial cox1 translation regulator ppr4.